A 782-amino-acid chain; its full sequence is MDVTELEENLFAASDAKLHGDMCKELSGVLCKVLSIFPSLEGARPRSKSGIQALCSLHIALEKAKNILQHCSECSKLYLAITGDAVLLKFEKAKIALIDGLKRVEDIVPSSIGSQILEIVGELENTRFMLDPSEKEVGDQIIALLQQGKKFDNCNDNTELEIFHRAATRLSITSSRVALAERRALKKLIDRARAEEDKRKESIVAYLLHLMRKCSKLFRSEILDENDSPGSYPCSPNEDHGSVHGFGRQLSRFGSLNDKPMNSINSGQMPVPPEELRCPISLQLMCDPVIIASGQTYERVCIEKWFSDGHNTCPKTQQQLPHISLTPNNCVKGLIASWCEQNGTQIPSGPPESQDLDYWRLALSDSESTKSQSVNSIGSYKLKGVKIVPLEENGTTVVERQNTEESFVSDDDDEEDSDINVLERYQDLLAVLNEEEGLEKKCKVVEKIRLLLKDDEEARIFMGANGFVEALLRFLGSAVDDNNAAAQDSGAMALFNLAVNNNRNKELMLTSGVIRLLEKMISSAESHGSATALYLNLSCLDEAKSVIGSSQAVPFLVQLLQKEIETQCKLDALHALYNLSTYSPNIPALLSSNIIKSLQGLLASTGENLWIEKSLAVLLNLASSQEGKDEAVSSQGMISSLATVLDMGDTTEQEQAVSCLLILCNGRESCIQMVLQEGVIPSLVSISVNGTPRGREKSQKLLMLFREERQQRDQPSSNRDEPPQKEPARKSLSAPLSVHGSTPASASVQDYEPRVLSKSMSRRKSMARPFSFFWKKSYSVRE.

The U-box domain maps to Val-271–Gln-345. 5 ARM repeats span residues Glu-456–Val-499, Asn-502–Asp-541, Glu-542–Thr-581, Ser-583–Ser-623, and Glu-626–Asn-665. Positions Glu-707–Arg-729 are enriched in basic and acidic residues. A disordered region spans residues Glu-707–Ser-765. Polar residues predominate over residues His-739 to Val-748.

It carries out the reaction S-ubiquitinyl-[E2 ubiquitin-conjugating enzyme]-L-cysteine + [acceptor protein]-L-lysine = [E2 ubiquitin-conjugating enzyme]-L-cysteine + N(6)-ubiquitinyl-[acceptor protein]-L-lysine.. It functions in the pathway protein modification; protein ubiquitination. Functionally, functions as an E3 ubiquitin ligase. This is U-box domain-containing protein 7 (PUB7) from Arabidopsis thaliana (Mouse-ear cress).